A 57-amino-acid polypeptide reads, in one-letter code: MFKYTRFEKARIIGARALQIAMGAPVLIDVPEGITPLEAAIMEFEKGVIPITVIRPS.

This sequence belongs to the archaeal Rpo6/eukaryotic RPB6 RNA polymerase subunit family. As to quaternary structure, part of the RNA polymerase complex.

The protein resides in the cytoplasm. It carries out the reaction RNA(n) + a ribonucleoside 5'-triphosphate = RNA(n+1) + diphosphate. Functionally, DNA-dependent RNA polymerase (RNAP) catalyzes the transcription of DNA into RNA using the four ribonucleoside triphosphates as substrates. The protein is DNA-directed RNA polymerase subunit Rpo6 of Pyrococcus abyssi (strain GE5 / Orsay).